A 300-amino-acid polypeptide reads, in one-letter code: Type II methyltransferase M.Cfr9I (300 aa).

The disordered stretch occupies residues 109-129 (RGYRAPDKKNPARAMAVRPDT).

This sequence belongs to the N(4)/N(6)-methyltransferase family. N(4) subfamily.

It catalyses the reaction a 2'-deoxycytidine in DNA + S-adenosyl-L-methionine = an N(4)-methyl-2'-deoxycytidine in DNA + S-adenosyl-L-homocysteine + H(+). A beta subtype methylase, recognizes the double-stranded sequence 5'-CCCGGG-3', methylates C-2 on both strands, and protects the DNA from cleavage by the Cfr9I endonuclease. This Citrobacter freundii protein is Type II methyltransferase M.Cfr9I.